Consider the following 1062-residue polypeptide: MPKRTDIHKIMVIGSGPIIIGQAAEFDYSGTQACLALRDEGYEVVLVNSNPATIMTDTTIADKVYIEPLTVDSVSRIIRQEYPDAILPTLGGQVGLNMALALAKTGILDELHIELLGTKLASIEQAEDREKFKELCQKLGEPVPPSKTVKIVEDALAFGDEIGYPIIVRPAFTMGGTGGGICHNHDELAEIAKNGLELSPVTECLIEKSIAGYKEIEFEVMRDSSDNAMIVCCMENFDPVGIHTGDSIVFSPSQTLSDKEYQMLRDCSLKLIRALKIEGGCNVQLALDPNSLDYDVIEVNPRVSRSSALASKATGYPIAKMAAKIAIGMTLDEIKNPVTGTTYAEFEPALDYVVCKIPRFPFDKFPKADRVLGTQMKATGEVMAIGRTAEEAMQKAVQSLEIDEKDLYSAKAHKASDDEIEQKLVRPQDDRLFYLAEAFRRGYSLEDVHELTKINFYFLDVVKHMVEMEKEIEANPDDLDVLRLAKKYGFSDQTIAKLWHEYPDQVRDLRKANGIVPVYKMVDTCAAEFESTTPYFYSTYDGENESRKSGKKSVIVIGSGPIRIGQGVEFDYATVHSVKALQKMGYEAIVINSNPETVSTDFSVSDKLYFEPLTLEDVLNVCDLEQPEGVIVQFGGQTSINLAAGLERHGVKILGTTVKDLDRAEDREEFDQIIKSLHLHQPQGLTATTHEGVMKAADQLGYPVLVRPSYVLGGKAMEIVYSKDELEEYLHDHADIAEDHPILVDDYLDGRECDVDAISDGKTVLLPGIMEHIEHAGVHSGDSMAVYPPQTFSDEVEEKITDVTKKLALALNCKGIMNIQFIVRDGDVYVIEVNPRASRTVPFLSKITGIEMAQVATRVIMGESLEQQGYADGLAPEPEMISVKAPVFSFSKLADVDSYLGPEMKSTGEVMGSDHTFAKALYKAFAGAKMQLPENGNVLLTIEDRDKEKILPIAKRFARIGYRIFATKGTANFLKKNDLHVELVTKVHEDEQADDNILNELRDGKIDLVINTMGHDIEKNSDGFIIRQMAIQQNVPLLTALDTADALLKSLENRSFATDALK.

Residues 1–401 (MPKRTDIHKI…AMQKAVQSLE (401 aa)) are carboxyphosphate synthetic domain. Residues Arg-129, Arg-169, Gly-175, Gly-176, Lys-208, Ile-210, Glu-215, Gly-241, Ile-242, His-243, Gln-284, and Glu-298 each coordinate ATP. The ATP-grasp 1 domain maps to 133-327 (KELCQKLGEP…IAKMAAKIAI (195 aa)). Mg(2+) contacts are provided by Gln-284, Glu-298, and Asn-300. Positions 284, 298, and 300 each coordinate Mn(2+). The tract at residues 402-546 (IDEKDLYSAK…YSTYDGENES (145 aa)) is oligomerization domain. The segment at 547 to 929 (RKSGKKSVIV…ALYKAFAGAK (383 aa)) is carbamoyl phosphate synthetic domain. One can recognise an ATP-grasp 2 domain in the interval 671–861 (DQIIKSLHLH…MAQVATRVIM (191 aa)). Arg-707, Asp-746, Leu-748, Glu-752, Gly-777, Val-778, His-779, Ser-780, Gln-820, and Glu-832 together coordinate ATP. The Mg(2+) site is built by Gln-820, Glu-832, and Asn-834. The Mn(2+) site is built by Gln-820, Glu-832, and Asn-834. In terms of domain architecture, MGS-like spans 930 to 1062 (MQLPENGNVL…NRSFATDALK (133 aa)). The allosteric domain stretch occupies residues 930–1062 (MQLPENGNVL…NRSFATDALK (133 aa)).

It belongs to the CarB family. In terms of assembly, composed of two chains; the small (or glutamine) chain promotes the hydrolysis of glutamine to ammonia, which is used by the large (or ammonia) chain to synthesize carbamoyl phosphate. Tetramer of heterodimers (alpha,beta)4. Requires Mg(2+) as cofactor. Mn(2+) is required as a cofactor.

The enzyme catalyses hydrogencarbonate + L-glutamine + 2 ATP + H2O = carbamoyl phosphate + L-glutamate + 2 ADP + phosphate + 2 H(+). The catalysed reaction is hydrogencarbonate + NH4(+) + 2 ATP = carbamoyl phosphate + 2 ADP + phosphate + 2 H(+). It participates in amino-acid biosynthesis; L-arginine biosynthesis; carbamoyl phosphate from bicarbonate: step 1/1. The protein operates within pyrimidine metabolism; UMP biosynthesis via de novo pathway; (S)-dihydroorotate from bicarbonate: step 1/3. Large subunit of the glutamine-dependent carbamoyl phosphate synthetase (CPSase). CPSase catalyzes the formation of carbamoyl phosphate from the ammonia moiety of glutamine, carbonate, and phosphate donated by ATP, constituting the first step of 2 biosynthetic pathways, one leading to arginine and/or urea and the other to pyrimidine nucleotides. The large subunit (synthetase) binds the substrates ammonia (free or transferred from glutamine from the small subunit), hydrogencarbonate and ATP and carries out an ATP-coupled ligase reaction, activating hydrogencarbonate by forming carboxy phosphate which reacts with ammonia to form carbamoyl phosphate. This is Carbamoyl phosphate synthase large chain from Lactobacillus delbrueckii subsp. bulgaricus (strain ATCC BAA-365 / Lb-18).